Consider the following 239-residue polypeptide: MSLMKEMLSVGVHFGHKKAFWNPQMKEYIFGINHGVHIINLEKTVPLFQDAVNFVGKTVANGGKILFVGTKRQAQDIVEAEAKRCGMSFVSHRWLGGMLTNYKTVRQSIKRLAQLEKMREDGTLESLTKKEMLQNIRTIEKLEKVLGGIKEMGGLPDAIVVIDSNKEHIAIQEAQKLGIKVVAIVDTNSNPEGIDYIIPGNDDAVKSISFYMKKFADAVIDAQGLDRAVEAKADEAAQA.

Belongs to the universal ribosomal protein uS2 family.

This Francisella tularensis subsp. tularensis (strain FSC 198) protein is Small ribosomal subunit protein uS2.